Reading from the N-terminus, the 94-residue chain is uncharacterized protein (94 aa).

As to expression, expressed in heart.

This is an uncharacterized protein from Homo sapiens (Human).